We begin with the raw amino-acid sequence, 244 residues long: Phosphoadenosine 5'-phosphosulfate reductase (244 aa).

Cys239 (nucleophile; cysteine thiosulfonate intermediate) is an active-site residue.

Belongs to the PAPS reductase family. CysH subfamily.

The protein localises to the cytoplasm. It carries out the reaction [thioredoxin]-disulfide + sulfite + adenosine 3',5'-bisphosphate + 2 H(+) = [thioredoxin]-dithiol + 3'-phosphoadenylyl sulfate. The protein operates within sulfur metabolism; hydrogen sulfide biosynthesis; sulfite from sulfate: step 3/3. Catalyzes the formation of sulfite from phosphoadenosine 5'-phosphosulfate (PAPS) using thioredoxin as an electron donor. The sequence is that of Phosphoadenosine 5'-phosphosulfate reductase from Shigella dysenteriae serotype 1 (strain Sd197).